Consider the following 339-residue polypeptide: Dihydroorotate dehydrogenase (quinone) (339 aa).

Residues 62–66 (AGMDK) and T86 each bind FMN. K66 serves as a coordination point for substrate. A substrate-binding site is contributed by 111–115 (NRMGF). 2 residues coordinate FMN: N139 and N172. N172 contacts substrate. S175 (nucleophile) is an active-site residue. N177 is a binding site for substrate. FMN contacts are provided by K217 and T245. 246 to 247 (NT) is a binding site for substrate. FMN-binding positions include G268, G297, and 318–319 (FS).

It belongs to the dihydroorotate dehydrogenase family. Type 2 subfamily. Monomer. The cofactor is FMN.

The protein localises to the cell membrane. The catalysed reaction is (S)-dihydroorotate + a quinone = orotate + a quinol. The protein operates within pyrimidine metabolism; UMP biosynthesis via de novo pathway; orotate from (S)-dihydroorotate (quinone route): step 1/1. Catalyzes the conversion of dihydroorotate to orotate with quinone as electron acceptor. This chain is Dihydroorotate dehydrogenase (quinone), found in Shewanella halifaxensis (strain HAW-EB4).